A 475-amino-acid chain; its full sequence is Probable GABA permease (475 aa).

12 helical membrane passes run 27–47 (VTML…SGHA), 48–68 (IAAA…LVVL), 105–125 (LYWW…AAIL), 127–147 (AWFP…LLTV), 163–183 (FALL…VAIV), 211–231 (AVLG…IVTI), 250–270 (VIWR…SIVP), 296–316 (LIVD…AIYT), 345–365 (PAVL…YFAP), 368–388 (VFTF…LVIA), 413–433 (PWLT…MLIM), and 438–458 (HEVF…LLNA).

This sequence belongs to the amino acid-polyamine-organocation (APC) superfamily. Amino acid transporter (AAT) (TC 2.A.3.1) family.

It localises to the membrane. In terms of biological role, involved in the degradation of beta-alanine. In Pseudomonas aeruginosa (strain ATCC 15692 / DSM 22644 / CIP 104116 / JCM 14847 / LMG 12228 / 1C / PRS 101 / PAO1), this protein is Probable GABA permease (bauD).